Consider the following 232-residue polypeptide: Probable fimbrial chaperone LpfB (232 aa).

Positions methionine 1–alanine 24 are cleaved as a signal peptide.

This sequence belongs to the periplasmic pilus chaperone family.

Its subcellular location is the periplasm. In terms of biological role, part of the lpfABCC'DE fimbrial operon. LP fimbriae may participate in the interaction with eukaryotic cells by assisting in microcolony formation. The chain is Probable fimbrial chaperone LpfB (lpfB) from Escherichia coli O157:H7.